The sequence spans 231 residues: Ribose-5-phosphate isomerase A (231 aa).

Substrate-binding positions include 32-35 (TGST), 85-88 (DGAD), and 98-101 (KGGG). Catalysis depends on E107, which acts as the Proton acceptor. K125 is a binding site for substrate.

The protein belongs to the ribose 5-phosphate isomerase family. In terms of assembly, homodimer.

It carries out the reaction aldehydo-D-ribose 5-phosphate = D-ribulose 5-phosphate. It functions in the pathway carbohydrate degradation; pentose phosphate pathway; D-ribose 5-phosphate from D-ribulose 5-phosphate (non-oxidative stage): step 1/1. Functionally, catalyzes the reversible conversion of ribose-5-phosphate to ribulose 5-phosphate. The polypeptide is Ribose-5-phosphate isomerase A (Paraburkholderia phytofirmans (strain DSM 17436 / LMG 22146 / PsJN) (Burkholderia phytofirmans)).